Here is a 364-residue protein sequence, read N- to C-terminus: Adenine deaminase (364 aa).

His25, His27, and His221 together coordinate Zn(2+). Glu224 (proton donor) is an active-site residue. Residue Asp301 coordinates Zn(2+). Residue Asp302 coordinates substrate.

Belongs to the metallo-dependent hydrolases superfamily. Adenosine and AMP deaminases family. Adenine deaminase type 2 subfamily. Requires Zn(2+) as cofactor.

It is found in the cytoplasm. The protein localises to the nucleus. The enzyme catalyses adenine + H2O + H(+) = hypoxanthine + NH4(+). Its function is as follows. Catalyzes the hydrolytic deamination of adenine to hypoxanthine. Plays an important role in the purine salvage pathway and in nitrogen catabolism. Has no activity with adenosine as a substrate. This is Adenine deaminase (aah1) from Emericella nidulans (strain FGSC A4 / ATCC 38163 / CBS 112.46 / NRRL 194 / M139) (Aspergillus nidulans).